Here is a 121-residue protein sequence, read N- to C-terminus: Small ribosomal subunit protein uS11c (121 aa).

It belongs to the universal ribosomal protein uS11 family. In terms of assembly, part of the 30S ribosomal subunit.

The protein resides in the plastid. It localises to the chloroplast. This Cyanidioschyzon merolae (strain NIES-3377 / 10D) (Unicellular red alga) protein is Small ribosomal subunit protein uS11c.